The sequence spans 369 residues: UDP-3-O-(3-hydroxymyristoyl)glucosamine N-acyltransferase (369 aa).

Histidine 240 functions as the Proton acceptor in the catalytic mechanism.

It belongs to the transferase hexapeptide repeat family. LpxD subfamily. Homotrimer.

The enzyme catalyses a UDP-3-O-[(3R)-3-hydroxyacyl]-alpha-D-glucosamine + a (3R)-hydroxyacyl-[ACP] = a UDP-2-N,3-O-bis[(3R)-3-hydroxyacyl]-alpha-D-glucosamine + holo-[ACP] + H(+). It catalyses the reaction UDP-3-O-[(3R)-3-hydroxytetradecanoyl]-alpha-D-glucosamine + (3R)-hydroxytetradecanoyl-[ACP] = UDP-2-N,3-O-bis[(3R)-3-hydroxytetradecanoyl]-alpha-D-glucosamine + holo-[ACP] + H(+). It functions in the pathway glycolipid biosynthesis; lipid IV(A) biosynthesis; lipid IV(A) from (3R)-3-hydroxytetradecanoyl-[acyl-carrier-protein] and UDP-N-acetyl-alpha-D-glucosamine: step 3/6. Catalyzes the N-acylation of UDP-3-O-(hydroxytetradecanoyl)glucosamine using 3-hydroxytetradecanoyl-ACP as the acyl donor. Is involved in the biosynthesis of lipid A, a phosphorylated glycolipid that anchors the lipopolysaccharide to the outer membrane of the cell. This is UDP-3-O-(3-hydroxymyristoyl)glucosamine N-acyltransferase from Blochmanniella floridana.